A 1063-amino-acid polypeptide reads, in one-letter code: DNA-directed RNA polymerase subunit beta (1063 aa).

This sequence belongs to the RNA polymerase beta chain family. In terms of assembly, in plastids the minimal PEP RNA polymerase catalytic core is composed of four subunits: alpha, beta, beta', and beta''. When a (nuclear-encoded) sigma factor is associated with the core the holoenzyme is formed, which can initiate transcription.

It is found in the plastid. The protein localises to the chloroplast. The enzyme catalyses RNA(n) + a ribonucleoside 5'-triphosphate = RNA(n+1) + diphosphate. In terms of biological role, DNA-dependent RNA polymerase catalyzes the transcription of DNA into RNA using the four ribonucleoside triphosphates as substrates. The sequence is that of DNA-directed RNA polymerase subunit beta from Zygnema circumcarinatum (Green alga).